We begin with the raw amino-acid sequence, 212 residues long: Large ribosomal subunit protein uL3 (212 aa).

A disordered region spans residues S133–V156.

The protein belongs to the universal ribosomal protein uL3 family. Part of the 50S ribosomal subunit. Forms a cluster with proteins L14 and L19.

One of the primary rRNA binding proteins, it binds directly near the 3'-end of the 23S rRNA, where it nucleates assembly of the 50S subunit. This is Large ribosomal subunit protein uL3 from Crocosphaera subtropica (strain ATCC 51142 / BH68) (Cyanothece sp. (strain ATCC 51142)).